The sequence spans 485 residues: UDP-glycosyltransferase 71B2 (485 aa).

UDP-alpha-D-glucose contacts are provided by residues S287, 354-356 (APQ), 371-379 (HCGWNSTLE), and 393-396 (YAEQ).

Belongs to the UDP-glycosyltransferase family.

Its function is as follows. Glucosyltransferase that glucosylates the cell wall inhibitor hypostatin in vivo to form a bioactive glucoside. This chain is UDP-glycosyltransferase 71B2 (UGT71B2), found in Arabidopsis thaliana (Mouse-ear cress).